The following is a 211-amino-acid chain: Metalloproteinase inhibitor 3 (211 aa).

The signal sequence occupies residues 1–23; the sequence is MTPWLGLVVLLGSWSLGDWGAEA. Zn(2+) is bound at residue Cys24. Involved in metalloproteinase-binding stretches follow at residues 24 to 27 and 88 to 89; these read CTCS and ES. Intrachain disulfides connect Cys24–Cys91, Cys26–Cys118, Cys36–Cys143, Cys145–Cys192, Cys150–Cys155, and Cys163–Cys184. In terms of domain architecture, NTR spans 24–143; sequence CTCSPSHPQD…GLNYRYHLGC (120 aa). The tract at residues 105–188 is mediates interaction with EFEMP1; the sequence is TGRVYDGKMY…SKHYACIRQK (84 aa). A glycan (N-linked (GlcNAc...) asparagine) is linked at Asn207.

The protein belongs to the protease inhibitor I35 (TIMP) family. In terms of assembly, interacts with EFEMP1. Interacts with KDR.

It is found in the secreted. The protein localises to the extracellular space. It localises to the extracellular matrix. Its function is as follows. Mediates a variety of processes including matrix regulation and turnover, inflammation, and angiogenesis, through reversible inhibition of zinc protease superfamily enzymes, primarily matrix metalloproteinases (MMPs). Regulates extracellular matrix (ECM) remodeling through inhibition of matrix metalloproteinases (MMP) including MMP-1, MMP-2, MMP-3, MMP-7, MMP-9, MMP-13, MMP-14 and MMP-15. Additionally, modulates the processing of amyloid precursor protein (APP) and apolipoprotein E receptor ApoER2 by inhibiting two alpha-secretases ADAM10 and ADAM17. Functions as a tumor suppressor and a potent inhibitor of angiogenesis. Exerts its anti-angiogenic effect by directly interacting with vascular endothelial growth factor (VEGF) receptor-2/KDR, preventing its binding to the VEGFA ligand. Selectively induces apoptosis in angiogenic endothelial cells through a caspase-independent cell death pathway. Mechanistically, inhibits matrix-induced focal adhesion kinase PTK2 tyrosine phosphorylation and association with paxillin/PXN and disrupts the incorporation of ITGB3, PTK2 and PXN into focal adhesion contacts on the matrix. In Bos taurus (Bovine), this protein is Metalloproteinase inhibitor 3 (TIMP3).